We begin with the raw amino-acid sequence, 218 residues long: Response regulator UvrY (218 aa).

A Response regulatory domain is found at 3 to 119 (NVLLVDDHEL…EVVSAIRSVY (117 aa)). A 4-aspartylphosphate modification is found at Asp-54. In terms of domain architecture, HTH luxR-type spans 143 to 208 (TESPFASLSE…ELTHLAIRHG (66 aa)). The H-T-H motif DNA-binding region spans 167 to 186 (VNEISEQLNLSPKTVNSYRY).

In terms of processing, phosphorylated and activated by BarA.

The protein localises to the cytoplasm. Functionally, member of the two-component regulatory system UvrY/BarA involved in the regulation of carbon metabolism via the CsrA/CsrB regulatory system. UvrY activates the transcription of the untranslated csrB RNA and of barA, in an autoregulatory loop. Mediates the effects of CsrA on csrB RNA by BarA-dependent and BarA-independent mechanisms. The protein is Response regulator UvrY (uvrY) of Escherichia coli (strain K12).